Reading from the N-terminus, the 1141-residue chain is Isoleucine--tRNA ligase, cytoplasmic (1141 aa).

Residues 50–60 (PFATGLPHYGH) carry the 'HIGH' region motif. Residues 601 to 605 (KMSKS) carry the 'KMSKS' region motif. K604 provides a ligand contact to ATP.

Belongs to the class-I aminoacyl-tRNA synthetase family.

It localises to the cytoplasm. It carries out the reaction tRNA(Ile) + L-isoleucine + ATP = L-isoleucyl-tRNA(Ile) + AMP + diphosphate. The polypeptide is Isoleucine--tRNA ligase, cytoplasmic (Caenorhabditis elegans).